We begin with the raw amino-acid sequence, 867 residues long: Ataxin-7 (867 aa).

Over residues 1–15 (MSERAADDVRGEPRR) the composition is skewed to basic and acidic residues. Positions 1 to 59 (MSERAADDVRGEPRRAAGGAAAARQQQQQPQPLQPQRQHPPLRRPRAEDGGTGDTTTSA) are disordered. Residues 16–39 (AAGGAAAARQQQQQPQPLQPQRQH) show a composition bias toward low complexity. Lysine 222 carries the N6-acetyllysine modification. Lysine 243 is covalently cross-linked (Glycyl lysine isopeptide (Lys-Gly) (interchain with G-Cter in SUMO); alternate). Lysine 243 participates in a covalent cross-link: Glycyl lysine isopeptide (Lys-Gly) (interchain with G-Cter in SUMO2); alternate. Positions 320-387 (KRLSEREFDP…KAREKELIRH (68 aa)) constitute an SCA7 domain. Basic and acidic residues predominate over residues 379-400 (AREKELIRHDSQQVPHPLRDPH). Disordered regions lie at residues 379–483 (AREK…EESV), 600–711 (HGTT…SHSV), and 845–867 (TGNISGAQGLTNNSLLHQPKARP). Pro residues-rich tracts occupy residues 426–437 (PQTPSLPRPPGC) and 447–462 (IDPPPGQESPHPPLPA). Residues 472-481 (EEGEGDDREE) show a composition bias toward acidic residues. A compositionally biased stretch (low complexity) spans 619 to 647 (SVQSRQVSASSSPPSTPSGLSSVPSSPLS). A compositionally biased stretch (basic residues) spans 649–659 (KPQKWKPSKSI). The segment covering 665-674 (SALSTNCHNA) has biased composition (polar residues). Positions 689–711 (SSPLLVPSSSSSSSSSSSSSHSV) are enriched in low complexity. The span at 846 to 860 (GNISGAQGLTNNSLL) shows a compositional bias: polar residues.

Belongs to the ataxin-7 family. As to quaternary structure, component of the SAGA transcription coactivator-HAT complex, at least composed of SUPT3H, GCN5L2, TAF5L, TAF6L, SUPT7L, TADA3L, TAD1L, TAF10, TAF12, TRRAP, TAF9 and ATXN7. The STAGA core complex is associated with a subcomplex required for histone deubiquitination composed of ATXN7L3, ENY2 and USP22. Interacts with SORBS1, PSMC1 and CRX. Interacts with TRRAP, GCN5L2 and TAF10. Interacts with alpha tubulin. Proteolytically cleaved by caspase-7 (CASP7). In terms of processing, sumoylation has no effect on subcellular location or interaction with components of the STAGA complex. As to expression, widely expressed in adult tissues, with the highest expression in heart, brain, liver and kidney.

Its subcellular location is the nucleus. The protein resides in the nucleolus. The protein localises to the nucleus matrix. It is found in the cytoplasm. It localises to the cytoskeleton. Functionally, acts as a component of the SAGA (aka STAGA) transcription coactivator-HAT complex. Mediates the interaction of SAGA complex with the CRX and is involved in CRX-dependent gene activation. Probably involved in tethering the deubiquitination module within the SAGA complex. Necessary for microtubule cytoskeleton stabilization. Involved in neurodegeneration. The chain is Ataxin-7 (Atxn7) from Mus musculus (Mouse).